Consider the following 77-residue polypeptide: Large ribosomal subunit protein uL29 (77 aa).

The protein belongs to the universal ribosomal protein uL29 family.

This Corynebacterium urealyticum (strain ATCC 43042 / DSM 7109) protein is Large ribosomal subunit protein uL29.